Reading from the N-terminus, the 115-residue chain is Putative septation protein SpoVG (115 aa).

The tract at residues 88 to 115 is disordered; it reads PGTIATSEVSSQLEESDSDKTLSEDLKA. Residues 91–100 are compositionally biased toward polar residues; that stretch reads IATSEVSSQL. Positions 105-115 are enriched in basic and acidic residues; the sequence is SDKTLSEDLKA.

This sequence belongs to the SpoVG family.

Could be involved in septation. This Macrococcus caseolyticus (strain JCSC5402) (Macrococcoides caseolyticum) protein is Putative septation protein SpoVG.